Consider the following 358-residue polypeptide: MTEKTIVFKVGTSSLTQENGSLDRIKIARITNQLAQLHQKGYQIVLVTSGSIAAGFRRLGFDKRPTKIAEKQASAAVGQGLLIEEYTQNLMKDGIVSAQILLTQDDFADARRYQNASQALQVLLKQRAIPIINENDTIAIEEIKVGDNDTLSAQVASLLKADLLVLLTDVDGLYTANPNSDPTAQHLPQIKEITEDLFAMAAGAGSSNGTGGMTTKLQAAQIATKSGVPVFICSSKEDTALLQAVTQANRGTLFLADDHAMNQRKQWMAFYARTDAAVEVDAGAVDAMLHQGRSLLATGVKALEGDFEVGQVVEVYSQADHRLIGKGRVKLSSKDLQDQLANGRAEGVLIHRNDWVSL.

An ATP-binding site is contributed by K9. The substrate site is built by S49, D136, and N148. ATP contacts are provided by residues 168 to 169 (TD) and 210 to 216 (TGGMTTK). The PUA domain occupies 275–353 (DAAVEVDAGA…RAEGVLIHRN (79 aa)).

This sequence belongs to the glutamate 5-kinase family.

The protein resides in the cytoplasm. The catalysed reaction is L-glutamate + ATP = L-glutamyl 5-phosphate + ADP. It functions in the pathway amino-acid biosynthesis; L-proline biosynthesis; L-glutamate 5-semialdehyde from L-glutamate: step 1/2. Its function is as follows. Catalyzes the transfer of a phosphate group to glutamate to form L-glutamate 5-phosphate. The sequence is that of Glutamate 5-kinase from Streptococcus suis (strain 05ZYH33).